The primary structure comprises 269 residues: Tryptophan synthase alpha chain (269 aa).

Catalysis depends on proton acceptor residues E49 and D60.

The protein belongs to the TrpA family. Tetramer of two alpha and two beta chains.

The enzyme catalyses (1S,2R)-1-C-(indol-3-yl)glycerol 3-phosphate + L-serine = D-glyceraldehyde 3-phosphate + L-tryptophan + H2O. It functions in the pathway amino-acid biosynthesis; L-tryptophan biosynthesis; L-tryptophan from chorismate: step 5/5. In terms of biological role, the alpha subunit is responsible for the aldol cleavage of indoleglycerol phosphate to indole and glyceraldehyde 3-phosphate. This Buchnera aphidicola subsp. Acyrthosiphon pisum (strain APS) (Acyrthosiphon pisum symbiotic bacterium) protein is Tryptophan synthase alpha chain.